Consider the following 191-residue polypeptide: Protein hugin (191 aa).

Positions 1-24 (MCGPSYCTLLLIAASCYILVCSHA) are cleaved as a signal peptide. A propeptide spanning residues 25 to 119 (KSLQGTSKLD…LTYYLLLQKL (95 aa)) is cleaved from the precursor. A leucine amide mark is found at leucine 137 and leucine 181. A propeptide spanning residues 185 to 191 (AQVCGGD) is cleaved from the precursor.

It belongs to the pyrokinin family. As to expression, expressed in a subgroup of neurosecretory cells in the subesophageal ganglion from embryonic stage 9 to larval stages.

The protein resides in the secreted. In terms of biological role, probably has a role in larval molting. This is Protein hugin (Hug) from Drosophila melanogaster (Fruit fly).